Here is a 494-residue protein sequence, read N- to C-terminus: Transmembrane and coiled-coil domain-containing protein 6 (494 aa).

A coiled-coil region spans residues 15-39 (GVEELRRRRREREAALRKARREQQL). 2 consecutive transmembrane segments (helical) span residues 338–358 (LVAA…ALLP) and 386–406 (PLLQ…TVLC).

It is found in the membrane. The chain is Transmembrane and coiled-coil domain-containing protein 6 (Tmco6) from Mus musculus (Mouse).